Consider the following 314-residue polypeptide: Acetaldehyde dehydrogenase 1 (314 aa).

NAD(+) is bound at residue 15-18 (SGNI). Cys-133 (acyl-thioester intermediate) is an active-site residue. NAD(+) is bound by residues 164–172 (SAGPGTRAN) and Asn-291.

The protein belongs to the acetaldehyde dehydrogenase family.

It catalyses the reaction acetaldehyde + NAD(+) + CoA = acetyl-CoA + NADH + H(+). This is Acetaldehyde dehydrogenase 1 from Paraburkholderia xenovorans (strain LB400).